A 431-amino-acid polypeptide reads, in one-letter code: Ornithine aminotransferase, mitochondrial (431 aa).

Lys-286 carries the post-translational modification N6-(pyridoxal phosphate)lysine.

This sequence belongs to the class-III pyridoxal-phosphate-dependent aminotransferase family. As to quaternary structure, homotetramer. The cofactor is pyridoxal 5'-phosphate.

Its subcellular location is the mitochondrion matrix. It carries out the reaction a 2-oxocarboxylate + L-ornithine = L-glutamate 5-semialdehyde + an L-alpha-amino acid. Its pathway is amino-acid biosynthesis; L-proline biosynthesis; L-glutamate 5-semialdehyde from L-ornithine: step 1/1. The protein is Ornithine aminotransferase, mitochondrial (Oat) of Drosophila melanogaster (Fruit fly).